The primary structure comprises 75 residues: Small ribosomal subunit protein bS18 (75 aa).

This sequence belongs to the bacterial ribosomal protein bS18 family. As to quaternary structure, part of the 30S ribosomal subunit. Forms a tight heterodimer with protein bS6.

In terms of biological role, binds as a heterodimer with protein bS6 to the central domain of the 16S rRNA, where it helps stabilize the platform of the 30S subunit. The polypeptide is Small ribosomal subunit protein bS18 (Cereibacter sphaeroides (strain KD131 / KCTC 12085) (Rhodobacter sphaeroides)).